The sequence spans 107 residues: Iron-sulfur cluster assembly protein CyaY (107 aa).

This sequence belongs to the frataxin family.

Involved in iron-sulfur (Fe-S) cluster assembly. May act as a regulator of Fe-S biogenesis. The chain is Iron-sulfur cluster assembly protein CyaY from Neisseria meningitidis serogroup B (strain ATCC BAA-335 / MC58).